The sequence spans 354 residues: Ribosomal RNA large subunit methyltransferase M (354 aa).

Residues S183, 216 to 219 (SPGG), D235, D255, and D271 contribute to the S-adenosyl-L-methionine site. Residue K300 is the Proton acceptor of the active site.

This sequence belongs to the class I-like SAM-binding methyltransferase superfamily. RNA methyltransferase RlmE family. RlmM subfamily. As to quaternary structure, monomer.

The protein localises to the cytoplasm. The enzyme catalyses cytidine(2498) in 23S rRNA + S-adenosyl-L-methionine = 2'-O-methylcytidine(2498) in 23S rRNA + S-adenosyl-L-homocysteine + H(+). Its function is as follows. Catalyzes the 2'-O-methylation at nucleotide C2498 in 23S rRNA. In Pseudomonas putida (strain ATCC 47054 / DSM 6125 / CFBP 8728 / NCIMB 11950 / KT2440), this protein is Ribosomal RNA large subunit methyltransferase M.